Here is a 495-residue protein sequence, read N- to C-terminus: Tripartite motif-containing protein 5 (495 aa).

Ala2 is subject to N-acetylalanine. The RING-type zinc-finger motif lies at 15-60 (CPICLELLTEPLSLHCGHSFCQACITANHKKSMLYKEGERSCPVCR). A Phosphoserine modification is found at Ser87. The segment at 92 to 133 (QKVDHCARHGEKLLLFCQEDRKVICWLCERSQEHRGHHTFLM) adopts a B box-type zinc-finger fold. Residues Cys97, His100, Cys119, and His125 each contribute to the Zn(2+) site. Residues 137-225 (AQEYHVKLQT…LTKSETEMVQ (89 aa)) are a coiled coil. Residues 187-200 (FEQLREILDWEESN) are required for interaction with GABARAP and for autophagy. A B30.2/SPRY domain is found at 283 to 495 (LKGILDMFRE…VPMTLCSPSS (213 aa)).

It belongs to the TRIM/RBCC family. Can form homodimers and homotrimers. In addition to lower-order dimerization, also exhibits a higher-order multimerization and both low- and high-order multimerizations are essential for its restriction activity. Interacts with BTBD1 and BTBD2. Interacts with PSMC4, PSMC5, PSMD7 and HSPA8/HSC70. Interacts (via B30.2/SPRY domain) with HSPA1A/B. Interacts with PSMC2, MAP3K7/TAK1, TAB2 and TAB3. Interacts with SQSTM1. Interacts with TRIM6 and TRIM34. Interacts with ULK1 (phosphorylated form), GABARAP, GABARAPL1, GABARAPL2, MAP1LC3A, MAP1LC3C and BECN1. In terms of processing, degraded in a proteasome-independent fashion in the absence of viral infection but in a proteasome-dependent fashion following exposure to restriction sensitive virus. Autoubiquitinated in a RING finger- and UBE2D2-dependent manner. Monoubiquitinated by TRIM21. Deubiquitinated by Yersinia YopJ. Ubiquitination may not lead to proteasomal degradation.

Its subcellular location is the cytoplasm. The protein resides in the nucleus. The enzyme catalyses S-ubiquitinyl-[E2 ubiquitin-conjugating enzyme]-L-cysteine + [acceptor protein]-L-lysine = [E2 ubiquitin-conjugating enzyme]-L-cysteine + N(6)-ubiquitinyl-[acceptor protein]-L-lysine.. The protein operates within protein modification; protein ubiquitination. In terms of biological role, capsid-specific restriction factor that prevents infection from non-host-adapted retroviruses. Blocks viral replication early in the life cycle, after viral entry but before reverse transcription. In addition to acting as a capsid-specific restriction factor, also acts as a pattern recognition receptor that activates innate immune signaling in response to the retroviral capsid lattice. Binding to the viral capsid triggers its E3 ubiquitin ligase activity, and in concert with the heterodimeric ubiquitin conjugating enzyme complex UBE2V1-UBE2N (also known as UBC13-UEV1A complex) generates 'Lys-63'-linked polyubiquitin chains, which in turn are catalysts in the autophosphorylation of the MAP3K7/TAK1 complex (includes TAK1, TAB2, and TAB3). Activation of the MAP3K7/TAK1 complex by autophosphorylation results in the induction and expression of NF-kappa-B and MAPK-responsive inflammatory genes, thereby leading to an innate immune response in the infected cell. Plays a role in regulating autophagy through activation of autophagy regulator BECN1 by causing its dissociation from its inhibitors BCL2 and TAB2. In Pygathrix nemaeus (Red-shanked douc langur), this protein is Tripartite motif-containing protein 5 (TRIM5).